A 467-amino-acid chain; its full sequence is Cysteine--tRNA ligase (467 aa).

Cys30 serves as a coordination point for Zn(2+). The 'HIGH' region motif lies at 32-42 (PTVYNYIHIGN). The Zn(2+) site is built by Cys210, His235, and Glu239. The 'KMSKS' region signature appears at 267–271 (KMSKS). Position 270 (Lys270) interacts with ATP. Ser271 carries the phosphoserine modification.

Belongs to the class-I aminoacyl-tRNA synthetase family. As to quaternary structure, monomer. The cofactor is Zn(2+).

The protein resides in the cytoplasm. The catalysed reaction is tRNA(Cys) + L-cysteine + ATP = L-cysteinyl-tRNA(Cys) + AMP + diphosphate. This Geobacillus thermodenitrificans (strain NG80-2) protein is Cysteine--tRNA ligase.